A 488-amino-acid chain; its full sequence is Photosystem II CP43 reaction center protein (488 aa).

The propeptide occupies Met1–Glu29. 5 helical membrane passes run Leu84–Ala108, Leu149–Asn170, Lys193–Ser215, Lys270–Ser290, and Trp306–Ala327. Glu382 is a [CaMn4O5] cluster binding site. The chain crosses the membrane as a helical span at residues Arg462–Pro486.

The protein belongs to the PsbB/PsbC family. PsbC subfamily. In terms of assembly, PSII is composed of 1 copy each of membrane proteins PsbA, PsbB, PsbC, PsbD, PsbE, PsbF, PsbH, PsbI, PsbJ, PsbK, PsbL, PsbM, PsbT, PsbX, PsbY, PsbZ, Psb30/Ycf12, at least 3 peripheral proteins of the oxygen-evolving complex and a large number of cofactors. It forms dimeric complexes. The cofactor is Binds multiple chlorophylls and provides some of the ligands for the Ca-4Mn-5O cluster of the oxygen-evolving complex. It may also provide a ligand for a Cl- that is required for oxygen evolution. PSII binds additional chlorophylls, carotenoids and specific lipids..

The protein resides in the plastid. The protein localises to the chloroplast thylakoid membrane. One of the components of the core complex of photosystem II (PSII). It binds chlorophyll and helps catalyze the primary light-induced photochemical processes of PSII. PSII is a light-driven water:plastoquinone oxidoreductase, using light energy to abstract electrons from H(2)O, generating O(2) and a proton gradient subsequently used for ATP formation. The protein is Photosystem II CP43 reaction center protein of Pyropia yezoensis (Susabi-nori).